The chain runs to 538 residues: Methionine--tRNA ligase (538 aa).

A 'HIGH' region motif is present at residues 21–31 (YYVNDAPHLGH). Residues Cys-137, Cys-140, Cys-162, and His-165 each contribute to the Zn(2+) site. Residues 313–317 (KMSKS) carry the 'KMSKS' region motif. Lys-316 provides a ligand contact to ATP.

Belongs to the class-I aminoacyl-tRNA synthetase family. MetG type 2A subfamily. In terms of assembly, monomer. The cofactor is Zn(2+).

It localises to the cytoplasm. The enzyme catalyses tRNA(Met) + L-methionine + ATP = L-methionyl-tRNA(Met) + AMP + diphosphate. Functionally, is required not only for elongation of protein synthesis but also for the initiation of all mRNA translation through initiator tRNA(fMet) aminoacylation. The polypeptide is Methionine--tRNA ligase (Streptomyces coelicolor (strain ATCC BAA-471 / A3(2) / M145)).